The following is a 110-amino-acid chain: Small ribosomal subunit protein bS16 (110 aa).

Residues 81 to 104 (VRPAEVLGKQKQEKERSAKKKDAT) show a composition bias toward basic and acidic residues. The segment at 81–110 (VRPAEVLGKQKQEKERSAKKKDATASETSE) is disordered.

The protein belongs to the bacterial ribosomal protein bS16 family.

The polypeptide is Small ribosomal subunit protein bS16 (Prochlorococcus marinus (strain NATL1A)).